We begin with the raw amino-acid sequence, 372 residues long: O-methyltransferase bfoE (372 aa).

Position 186 (Trp186) interacts with S-adenosyl-L-methionine. His285 (proton acceptor) is an active-site residue.

It belongs to the class I-like SAM-binding methyltransferase superfamily. Cation-independent O-methyltransferase family.

Its pathway is secondary metabolite biosynthesis. In terms of biological role, cytochrome P450 monooxygenase; part of the gene cluster that mediates the biosynthesis of bifonsecin B, a dimeric gamma-naphthopyrone. The first step in the biosynthesis of bifonsecin B is the production of gamma-naphthopyrone precursor YWA1 by the non-reducing polyketide synthase albA, via condensation of one acetyl-CoA starter unit with 6 malonyl-CoA units. YWA1 is then methylated by bfoE at position C-6 to yield foncesin which is further methylated at position C-8 by bfoD to produce fonsecin B. A key enzyme in the biosynthetic pathway is the cytochrome P450 monooxygenase bfoB which catalyzes the oxidative dimerization of fonsecin B to bifonsecin B. Bfob also catalyzes the oxidative dimerization of rubrofusarin B into nigerone. The stereoselectivity of bfoB is influenced by the two natural monomeric substrates; homodimerization of fonsecin B yields a stereochemically pure biaryl, M-foncerine B, while rubrofusarin B yields a mixture of enantiomers M- and P-nigerone. The sequence is that of O-methyltransferase bfoE from Aspergillus brasiliensis (strain CBS 101740 / IMI 381727 / IBT 21946).